The following is a 470-amino-acid chain: UDP-N-acetylmuramate--L-alanine ligase (470 aa).

Glycine 114–threonine 120 is an ATP binding site.

This sequence belongs to the MurCDEF family.

Its subcellular location is the cytoplasm. It carries out the reaction UDP-N-acetyl-alpha-D-muramate + L-alanine + ATP = UDP-N-acetyl-alpha-D-muramoyl-L-alanine + ADP + phosphate + H(+). The protein operates within cell wall biogenesis; peptidoglycan biosynthesis. Functionally, cell wall formation. This Xanthobacter autotrophicus (strain ATCC BAA-1158 / Py2) protein is UDP-N-acetylmuramate--L-alanine ligase.